The chain runs to 598 residues: DNA ligase (598 aa).

ATP is bound at residue Asp258. Catalysis depends on Lys260, which acts as the N6-AMP-lysine intermediate. 6 residues coordinate ATP: Arg265, Arg280, Glu310, Phe350, Arg427, and Lys433.

It belongs to the ATP-dependent DNA ligase family. Requires Mg(2+) as cofactor.

It carries out the reaction ATP + (deoxyribonucleotide)n-3'-hydroxyl + 5'-phospho-(deoxyribonucleotide)m = (deoxyribonucleotide)n+m + AMP + diphosphate.. In terms of biological role, DNA ligase that seals nicks in double-stranded DNA during DNA replication, DNA recombination and DNA repair. The chain is DNA ligase from Sulfolobus acidocaldarius (strain ATCC 33909 / DSM 639 / JCM 8929 / NBRC 15157 / NCIMB 11770).